We begin with the raw amino-acid sequence, 421 residues long: MRALPTLDSLARMRPPLGDPRAAEDTLTPRPANKSAVERLAADRAKYVRSTLGSSRGPVSEHRVPEAPGVQHRNPIPSALAPAPVARRAIARKPLRPDSLVIYRQKCEFVRGSDADCSRVGLMKKFFQGSGKDKMAVAPETTRVADEDKTTKETEATWTKSSQAAAARPASMLPPPTPVVAVKSPAEKTRVANEDKTTKETEATWTKSSQAAAARPASMLPPPTPVVAVKSPAEKTRVANEDKTTKETEATWTKSSQAAATRPASMLPPPTPVVAVKSPALPFEVAPRVPVGCSGVQLRVSRSKGLQRSQSDLSSRYSIAKAESDTFFKYCGLDPDVVEALGRENFSAGSDCVTLKVRSVSMAASDSSFSRHSEDGLQEEELLEQVPSTTSVVERNARIIKWLFTCKKAKETPSQKLQGPA.

3 disordered regions span residues 1 to 36 (MRAL…NKSA), 51 to 80 (TLGS…PSAL), and 141 to 266 (TTRV…PASM). 3 stretches are compositionally biased toward basic and acidic residues: residues 143-155 (RVAD…KETE), 185-202 (PAEK…KETE), and 232-249 (PAEK…KETE). Ser350 carries the post-translational modification Phosphoserine.

It belongs to the FAM110 family. As to quaternary structure, interacts with AKT1; the interaction is transient and follows AKT1 activation. Interacts with PPP2CA and alpha-tubulin.

The protein resides in the cytoplasm. It is found in the cytoskeleton. The protein localises to the microtubule organizing center. It localises to the centrosome. Its subcellular location is the spindle pole. The protein resides in the nucleus. In terms of biological role, may play a role in microtubule organization. May play a role in cell spreading and cell migration of epithelial cells; the function may involve the AKT1 signaling pathway. The polypeptide is Protein FAM110C (Fam110c) (Mus musculus (Mouse)).